The following is a 118-amino-acid chain: Beta-2-microglobulin (118 aa).

The N-terminal stretch at 1–20 (MARVVALVLLGLLSLTGLEA) is a signal peptide. The region spanning 25 to 111 (PKVQVYSRHP…QHSTLKEPLI (87 aa)) is the Ig-like C1-type domain. A disulfide bridge links Cys-45 with Cys-99.

Belongs to the beta-2-microglobulin family. Heterodimer of an alpha chain and a beta chain. Beta-2-microglobulin is the beta-chain of major histocompatibility complex class I molecules.

The protein localises to the secreted. Its function is as follows. Component of the class I major histocompatibility complex (MHC). Involved in the presentation of peptide antigens to the immune system. This is Beta-2-microglobulin (B2M) from Equus asinus (Donkey).